A 94-amino-acid polypeptide reads, in one-letter code: Large ribosomal subunit protein uL23 (94 aa).

It belongs to the universal ribosomal protein uL23 family. As to quaternary structure, part of the 50S ribosomal subunit. Contacts protein L29, and trigger factor when it is bound to the ribosome.

One of the early assembly proteins it binds 23S rRNA. One of the proteins that surrounds the polypeptide exit tunnel on the outside of the ribosome. Forms the main docking site for trigger factor binding to the ribosome. The polypeptide is Large ribosomal subunit protein uL23 (Trichlorobacter lovleyi (strain ATCC BAA-1151 / DSM 17278 / SZ) (Geobacter lovleyi)).